Consider the following 439-residue polypeptide: Trigger factor (439 aa).

The 86-residue stretch at 175–260 (SDKLVIDYQN…VKSVYVMKGM (86 aa)) folds into the PPIase FKBP-type domain.

Belongs to the FKBP-type PPIase family. Tig subfamily.

The protein localises to the cytoplasm. The catalysed reaction is [protein]-peptidylproline (omega=180) = [protein]-peptidylproline (omega=0). In terms of biological role, involved in protein export. Acts as a chaperone by maintaining the newly synthesized protein in an open conformation. Functions as a peptidyl-prolyl cis-trans isomerase. This chain is Trigger factor, found in Ehrlichia chaffeensis (strain ATCC CRL-10679 / Arkansas).